A 688-amino-acid chain; its full sequence is Elongation factor G (688 aa).

The 275-residue stretch at 8-282 folds into the tr-type G domain; that stretch reads EKFRNFGIMA…GVVDYLPSPL (275 aa). Residues 17–24, 81–85, and 135–138 each bind GTP; these read AHIDAGKT, DTPGH, and NKMD.

The protein belongs to the TRAFAC class translation factor GTPase superfamily. Classic translation factor GTPase family. EF-G/EF-2 subfamily.

It localises to the cytoplasm. Its function is as follows. Catalyzes the GTP-dependent ribosomal translocation step during translation elongation. During this step, the ribosome changes from the pre-translocational (PRE) to the post-translocational (POST) state as the newly formed A-site-bound peptidyl-tRNA and P-site-bound deacylated tRNA move to the P and E sites, respectively. Catalyzes the coordinated movement of the two tRNA molecules, the mRNA and conformational changes in the ribosome. The protein is Elongation factor G of Clostridium perfringens (strain ATCC 13124 / DSM 756 / JCM 1290 / NCIMB 6125 / NCTC 8237 / Type A).